Consider the following 583-residue polypeptide: Alpha-1,3-arabinosyltransferase XAT2 (583 aa).

The Cytoplasmic portion of the chain corresponds to 1-21 (MKPVERAKLVRSLRQESRRLR). Residues 22-42 (LLVLVIGFFLVTLTFVVISKP) form a helical; Signal-anchor for type II membrane protein membrane-spanning segment. Residues 43-583 (DALLFNLNGR…LLEVLDQLNQ (541 aa)) lie on the Lumenal side of the membrane. Residues 73-178 (RRSADTFPAA…NGKQEDGKPN (106 aa)) are disordered. Basic and acidic residues-rich tracts occupy residues 102–121 (TSEEEKRLLSSEPEQGKNEE) and 135–146 (EDNKNGEEEGHT). The segment covering 149 to 160 (SKVTLPTVSNYT) has biased composition (polar residues). Asparagine 158 carries an N-linked (GlcNAc...) asparagine glycan. Residues 162–178 (RDAEDTDNGKQEDGKPN) show a composition bias toward basic and acidic residues. 4 N-linked (GlcNAc...) asparagine glycosylation sites follow: asparagine 229, asparagine 382, asparagine 450, and asparagine 485.

This sequence belongs to the glycosyltransferase 61 family.

It is found in the golgi apparatus membrane. It participates in glycan metabolism. In terms of biological role, glycosyltransferase involved in the arabinosylation of xylan, the major hemicellulose (non-cellulosic component) of primary and secondary walls of angiosperms. Possesses alpha-1,3-arabinosyltransferase activity, transferring an arabinofuranose residue to the xylan backbone. This is Alpha-1,3-arabinosyltransferase XAT2 from Oryza sativa subsp. japonica (Rice).